We begin with the raw amino-acid sequence, 261 residues long: Methyl jasmonate esterase 1 (261 aa).

Residues 8-251 (FVLVHGACHG…MFSKPLDLCA (244 aa)) enclose the AB hydrolase-1 domain. The active-site Acyl-ester intermediate is the serine 82. Catalysis depends on charge relay system residues aspartate 211 and histidine 239.

Belongs to the AB hydrolase superfamily. Methylesterase family. In terms of assembly, homodimer.

It catalyses the reaction methyl (-)-jasmonate + H2O = jasmonate + methanol + H(+). It carries out the reaction methyl salicylate + H2O = salicylate + methanol + H(+). The protein operates within plant hormone biosynthesis. Its pathway is lipid metabolism; oxylipin biosynthesis. Functionally, methylesterase that catalyzes the hydrolysis of methyl jasmonate (MeJA) into jasmonate (JA). Can also use methyl salicylate (MeSA) as substrate with a lower efficiency. The sequence is that of Methyl jasmonate esterase 1 from Vitis vinifera (Grape).